A 963-amino-acid polypeptide reads, in one-letter code: Iron-responsive element-binding protein 2 (963 aa).

The [4Fe-4S] cluster site is built by Cys512, Cys578, and Cys581.

This sequence belongs to the aconitase/IPM isomerase family. In terms of assembly, interacts with RBCK1 only in iron-rich conditions. Interacts (when associated with the 4Fe-4S) with FBXL5. Interacts with CIAO1 and CIAO2A. Requires [4Fe-4S] cluster as cofactor. Post-translationally, ubiquitinated and degraded by the proteasome in presence of high level of iron and oxygen. Ubiquitinated by a SCF complex containing FBXL5. Upon iron and oxygen depletion FBXL5 is degraded, preventing ubiquitination and allowing its RNA-binding activity. As to expression, ubiquitously expressed in rat tissues, the highest amounts present in skeletal muscle and heart.

It is found in the cytoplasm. RNA-binding protein that binds to iron-responsive elements (IRES), which are stem-loop structures found in the 5'-UTR of ferritin, and delta aminolevulinic acid synthase mRNAs, and in the 3'-UTR of transferrin receptor mRNA. Binding to the IRE element in ferritin results in the repression of its mRNA translation. Binding of the protein to the transferrin receptor mRNA inhibits the degradation of this otherwise rapidly degraded mRNA. The sequence is that of Iron-responsive element-binding protein 2 (Ireb2) from Rattus norvegicus (Rat).